A 261-amino-acid chain; its full sequence is Small ribosomal subunit protein uS2 (261 aa).

Residue Ser2 is modified to N-acetylserine. The tract at residues 212 to 261 is disordered; sequence QNAAEEAKAEETEEAPAAEAETEWTGETDDVDWADSGATPAAEDAAASNW. The segment covering 222–244 has biased composition (acidic residues); sequence ETEEAPAAEAETEWTGETDDVDW.

The protein belongs to the universal ribosomal protein uS2 family. Component of the small ribosomal subunit. Mature ribosomes consist of a small (40S) and a large (60S) subunit. The 40S subunit contains about 33 different proteins and 1 molecule of RNA (18S). The 60S subunit contains about 49 different proteins and 3 molecules of RNA (25S, 5.8S and 5S). Interacts with RPS21.

It localises to the cytoplasm. Functionally, required for the assembly and/or stability of the 40S ribosomal subunit. Required for the processing of the 20S rRNA-precursor to mature 18S rRNA in a late step of the maturation of 40S ribosomal subunits. The polypeptide is Small ribosomal subunit protein uS2 (Candida tropicalis (Yeast)).